A 193-amino-acid polypeptide reads, in one-letter code: PBAN-type neuropeptides (193 aa).

Residues 1-19 (MYGAVLPGLFFIFISCVVA) form the signal peptide. I46 carries the isoleucine amide modification. Leucine amide occurs at positions 102 and 122. Residues 124–158 (RRLADDTPATPADQEMYRPDPEQIDSRTKYFSPRL) are disordered. Residues 138 to 151 (EMYRPDPEQIDSRT) are compositionally biased toward basic and acidic residues. A leucine amide mark is found at L158 and L168. Residues 186 to 193 (STNKTQST) constitute a propeptide that is removed on maturation.

Belongs to the pyrokinin family. As to expression, expressed in the mandibular, maxillary and labial neuromeres of the male and female brain-subesophageal ganglions, in the corpora cardiaca and all around the corpora allata, and at a lower level in the brain near the calyx and pedunculus of the mushroom body (at protein level). Expressed in larvae and adult of both sexes (at protein level). In terms of tissue distribution, expressed in corpora cardiaca (CC), corpora allata (CA) and gnathal ganglion (GNG) (at protein level). Expression in CC and CA detected in most animals, in GNG in some (at protein level). Expression not detected in CC, CA, AL or GNG (at protein level). As to expression, expressed in corpora cardiaca (CC), corpora allata (CA), antennal lobe (AL) and gnathal ganglion (GNG) (at protein level). Expression in CC, CA and GNG detected in most animals, expression in AL detected in few (at protein level). In terms of tissue distribution, expressed in corpora cardiaca (CC), corpora allata (CA), antennal lobe (AL) and gnathal ganglion (GNG) (at protein level). Expression in CC, CA and GNG detected in all animals, expression in AL detected in some (at protein level). Expressed in corpora cardiaca (CC), corpora allata (CA), antennal lobe (AL) and gnathal ganglion (GNG) (at protein level). Expression in CC, CA and GNG detected in most animals, expression in AL detected in some animals (at protein level).

It is found in the secreted. Its function is as follows. A hormone that controls sex pheromone production in female moths and pheromone responsiveness in male. This Agrotis ipsilon (Black cutworm moth) protein is PBAN-type neuropeptides.